The sequence spans 99 residues: Probable small ribosomal subunit protein cS23 (99 aa).

It belongs to the chloroplast-specific ribosomal protein cS23 family. In terms of assembly, part of the 30S ribosomal subunit.

Functionally, probably a ribosomal protein or a ribosome-associated protein. In Synechococcus sp. (strain JA-2-3B'a(2-13)) (Cyanobacteria bacterium Yellowstone B-Prime), this protein is Probable small ribosomal subunit protein cS23.